A 164-amino-acid chain; its full sequence is uncharacterized protein (164 aa).

Positions 1–18 are cleaved as a signal peptide; sequence MILILTIIVGFLIYFVTA. N-linked (GlcNAc...) asparagine; by host glycosylation is present at asparagine 88.

Belongs to the IIV-6 357R family.

This is an uncharacterized protein from Acheta domesticus (House cricket).